Reading from the N-terminus, the 293-residue chain is NAD kinase (293 aa).

The active-site Proton acceptor is aspartate 74. Residues 74–75 (DG), arginine 79, 148–149 (NE), arginine 176, aspartate 178, 189–194 (TAYALS), and glutamine 248 contribute to the NAD(+) site.

The protein belongs to the NAD kinase family. A divalent metal cation is required as a cofactor.

It localises to the cytoplasm. The enzyme catalyses NAD(+) + ATP = ADP + NADP(+) + H(+). Functionally, involved in the regulation of the intracellular balance of NAD and NADP, and is a key enzyme in the biosynthesis of NADP. Catalyzes specifically the phosphorylation on 2'-hydroxyl of the adenosine moiety of NAD to yield NADP. This Blochmanniella floridana protein is NAD kinase.